Consider the following 257-residue polypeptide: Phosphonates import ATP-binding protein PhnC (257 aa).

The region spanning 2–246 (IEFRNVSKVY…KFAEIYGDVA (245 aa)) is the ABC transporter domain. Residue 35 to 42 (GLSGAGKS) participates in ATP binding.

This sequence belongs to the ABC transporter superfamily. Phosphonates importer (TC 3.A.1.9.1) family. The complex is composed of two ATP-binding proteins (PhnC), two transmembrane proteins (PhnE) and a solute-binding protein (PhnD).

The protein localises to the cell membrane. It catalyses the reaction phosphonate(out) + ATP + H2O = phosphonate(in) + ADP + phosphate + H(+). In terms of biological role, part of the ABC transporter complex PhnCDE involved in phosphonates import. Responsible for energy coupling to the transport system. The chain is Phosphonates import ATP-binding protein PhnC from Bacillus thuringiensis subsp. konkukian (strain 97-27).